The following is a 160-amino-acid chain: Nucleotide-binding protein VF_1240 (160 aa).

This sequence belongs to the YajQ family.

Its function is as follows. Nucleotide-binding protein. The protein is Nucleotide-binding protein VF_1240 of Aliivibrio fischeri (strain ATCC 700601 / ES114) (Vibrio fischeri).